The primary structure comprises 75 residues: Large ribosomal subunit protein bL31 (75 aa).

This sequence belongs to the bacterial ribosomal protein bL31 family. Type A subfamily. As to quaternary structure, part of the 50S ribosomal subunit.

Its function is as follows. Binds the 23S rRNA. This Gluconobacter oxydans (strain 621H) (Gluconobacter suboxydans) protein is Large ribosomal subunit protein bL31.